The sequence spans 122 residues: Lithostathine (122 aa).

Positions Met1–Gly26 are cleaved as a signal peptide. The propeptide occupies Glu27–Arg37. In terms of domain architecture, C-type lectin spans Ile38 to Trp122. Residues Cys40 and Cys51 are joined by a disulfide bond.

Cleaved to give an A chain and a B chain joined by a disulfide bond. As to expression, in pancreatic acinar cells.

The protein resides in the secreted. Might act as an inhibitor of spontaneous calcium carbonate precipitation. The polypeptide is Lithostathine (PTP) (Sus scrofa (Pig)).